We begin with the raw amino-acid sequence, 762 residues long: 5-methyltetrahydropteroyltriglutamate--homocysteine methyltransferase (762 aa).

5-methyltetrahydropteroyltri-L-glutamate-binding positions include 16–19 (RELK) and K117. L-homocysteine contacts are provided by residues 438–440 (IGS) and E491. Residues 438-440 (IGS) and E491 contribute to the L-methionine site. Residues 522–523 (RC) and W568 contribute to the 5-methyltetrahydropteroyltri-L-glutamate site. D606 serves as a coordination point for L-homocysteine. Residue D606 participates in L-methionine binding. E612 contributes to the 5-methyltetrahydropteroyltri-L-glutamate binding site. Residues H648, C650, and E672 each contribute to the Zn(2+) site. The active-site Proton donor is H701. C733 contributes to the Zn(2+) binding site.

It belongs to the vitamin-B12 independent methionine synthase family. It depends on Zn(2+) as a cofactor.

It catalyses the reaction 5-methyltetrahydropteroyltri-L-glutamate + L-homocysteine = tetrahydropteroyltri-L-glutamate + L-methionine. It functions in the pathway amino-acid biosynthesis; L-methionine biosynthesis via de novo pathway; L-methionine from L-homocysteine (MetE route): step 1/1. Its function is as follows. Catalyzes the transfer of a methyl group from 5-methyltetrahydrofolate to homocysteine resulting in methionine formation. The polypeptide is 5-methyltetrahydropteroyltriglutamate--homocysteine methyltransferase (Pseudomonas fluorescens (strain ATCC BAA-477 / NRRL B-23932 / Pf-5)).